The following is a 775-amino-acid chain: E3 ubiquitin-protein ligase UHRF1 (775 aa).

Positions 1 to 77 (MWIQVRTMDG…IVQLLVRQIP (77 aa)) constitute a Ubiquitin-like domain. The tract at residues 81 to 128 (PTKDKECGISDADSGCGSGQGESDKNSSCGEGATDVDGQPAGINSENV) is disordered. Tudor-like stretches follow at residues 131 to 207 (SLYK…LRAR) and 214 to 283 (DLKV…IEEP). The linker stretch occupies residues 293-301 (PQKRQNGPE). The PHD-type zinc finger occupies 299 to 366 (GPECKHCKDN…DWYCPDCRND (68 aa)). 2 histone H3R2me0 binding regions span residues 333–337 (CDECD) and 353–355 (PQD). Positions 419–582 (GPIPGVPVGT…FLVWRYLLRR (164 aa)) constitute a YDG domain. The interval 445–446 (HV) is required to promote base flipping. Residues 463-464 (AG) and D469 each bind DNA. Required for formation of a 5-methylcytosine-binding pocket stretches follow at residues 466–469 (YEDD) and 478–481 (YTGS). Basic and acidic residues predominate over residues 616–628 (ASKEREKENKTED). Positions 616–655 (ASKEREKENKTEDELSESPSKGKRKRNSAGSGLSDAKSTP) are disordered. The RING-type zinc-finger motif lies at 706–745 (CICCQEVVYEPITTECHHNICKGCLDRSFKALVHNCPACR).

The protein resides in the nucleus. It catalyses the reaction S-ubiquitinyl-[E2 ubiquitin-conjugating enzyme]-L-cysteine + [acceptor protein]-L-lysine = [E2 ubiquitin-conjugating enzyme]-L-cysteine + N(6)-ubiquitinyl-[acceptor protein]-L-lysine.. The protein operates within protein modification; protein ubiquitination. Functionally, multidomain protein that acts as a key epigenetic regulator by bridging DNA methylation and chromatin modification. Specifically recognizes and binds hemimethylated DNA at replication forks via its YDG domain and recruits dnmt1 methyltransferase to ensure faithful propagation of the DNA methylation patterns through DNA replication. In addition to its role in maintenance of DNA methylation, also plays a key role in chromatin modification: through its tudor-like regions and PHD-type zinc fingers, specifically recognizes and binds histone H3 trimethylated at 'Lys-9' (H3K9me3) and unmethylated at 'Arg-2' (H3R2me0), respectively, and recruits chromatin proteins. Enriched in pericentric heterochromatin where it recruits different chromatin modifiers required for this chromatin replication. Also localizes to euchromatic regions where it negatively regulates transcription possibly by impacting DNA methylation and histone modifications. Has E3 ubiquitin-protein ligase activity by mediating the ubiquitination of target proteins. However, it is still unclear how E3 ubiquitin-protein ligase activity is related to its role in chromatin in vivo. This is E3 ubiquitin-protein ligase UHRF1 (uhrf1) from Xenopus tropicalis (Western clawed frog).